The following is a 226-amino-acid chain: Probable C4-dicarboxylate response regulator DctR (226 aa).

The 117-residue stretch at 7 to 123 (KVLLIEDDPM…RMRQALEKYK (117 aa)) folds into the Response regulatory domain. Aspartate 58 is modified (4-aspartylphosphate). The segment at residues 179-198 (AEEVAKALGIARVTARRYLD) is a DNA-binding region (H-T-H motif).

Post-translationally, phosphorylated by DctS.

The protein resides in the cytoplasm. Member of the two-component regulatory system DctS/DctR. Essential for expression of dctP. The chain is Probable C4-dicarboxylate response regulator DctR (dctR) from Bacillus subtilis (strain 168).